Here is a 319-residue protein sequence, read N- to C-terminus: Taste receptor type 2 member 30 (319 aa).

M1 is a topological domain (extracellular). The helical transmembrane segment at 2 to 22 (ITFLPIIFSILIVVIFVVGNF) threads the bilayer. Topologically, residues 23–46 (ANGFIALVNSIEWVKRQKISFVDQ) are cytoplasmic. A helical transmembrane segment spans residues 47-67 (ILTALAVSRVGLLWVLLLHWY). Residues 68–86 (ATQLNPAFYSVEVRITVYN) are Extracellular-facing. A helical membrane pass occupies residues 87 to 107 (VWAVTNHFSSWLATSLSMFYL). Residues 108 to 126 (LKIANFSNLIFLRIKRRVK) are Cytoplasmic-facing. A helical transmembrane segment spans residues 127–147 (SVVLVILLGPLLFLVCHLFVI). Residues 148–178 (NMDETIWTKEYEGNMTWKIKLKSAMYHSNMT) are Extracellular-facing. 2 N-linked (GlcNAc...) asparagine glycosylation sites follow: N161 and N176. A helical membrane pass occupies residues 179–199 (LTILANFVPLTLTLISFLLLI). Residues 200-229 (CSLCKHLKKMQLHGKGSQDPSTKVHIKALQ) lie on the Cytoplasmic side of the membrane. Residues 230–250 (TVTSFLLLCAIYFLSMIISVC) traverse the membrane as a helical segment. The Extracellular portion of the chain corresponds to 251–259 (NLGRLQKQP). Residues 260 to 280 (VFMFCQAIIFSYPSTHPFILI) traverse the membrane as a helical segment. At 281 to 319 (LGNKKLKQIFLSVLWHVRYWVKDRSLRLHRFTRAALCKG) the chain is on the cytoplasmic side.

The protein belongs to the G-protein coupled receptor T2R family.

The protein localises to the membrane. Receptor that may play a role in the perception of bitterness and is gustducin-linked. May play a role in sensing the chemical composition of the gastrointestinal content. The activity of this receptor may stimulate alpha gustducin, mediate PLC-beta-2 activation and lead to the gating of TRPM5. This is Taste receptor type 2 member 30 (TAS2R30) from Pan paniscus (Pygmy chimpanzee).